A 120-amino-acid polypeptide reads, in one-letter code: UPF0231 protein Ent638_0667 (120 aa).

This sequence belongs to the UPF0231 family.

In Enterobacter sp. (strain 638), this protein is UPF0231 protein Ent638_0667.